Here is a 344-residue protein sequence, read N- to C-terminus: GDSL esterase/lipase At1g73610 (344 aa).

Positions 1–24 are cleaved as a signal peptide; that stretch reads MNCLMFFKMLLAFSFISLFYVGNA. Asparagine 30 carries N-linked (GlcNAc...) asparagine glycosylation. The Nucleophile role is filled by serine 42. Residues aspartate 319 and histidine 322 contribute to the active site.

It belongs to the 'GDSL' lipolytic enzyme family.

It is found in the secreted. This Arabidopsis thaliana (Mouse-ear cress) protein is GDSL esterase/lipase At1g73610.